A 425-amino-acid polypeptide reads, in one-letter code: Histidine--tRNA ligase 1 (425 aa).

It belongs to the class-II aminoacyl-tRNA synthetase family. As to quaternary structure, homodimer.

Its subcellular location is the cytoplasm. The catalysed reaction is tRNA(His) + L-histidine + ATP = L-histidyl-tRNA(His) + AMP + diphosphate + H(+). This chain is Histidine--tRNA ligase 1, found in Bacillus cereus (strain ZK / E33L).